The sequence spans 377 residues: Stimulator of interferon genes protein (377 aa).

The Cytoplasmic segment spans residues 1–21 (MRRAEENNGFGTIPKRRNQHT). The helical transmembrane segment at 22–42 (PFYASIGMIVVIIVAFTSYHI) threads the bilayer. At 43–57 (TSYGDDRNRAMRQYS) the chain is on the extracellular side. A helical transmembrane segment spans residues 58-80 (FTFSLAYLAFLVGELLRRCCLFA). Residues 81–101 (EEYRHIETRYNGSLKKAIQTT) lie on the Cytoplasmic side of the membrane. A helical membrane pass occupies residues 102 to 122 (FSFGHNNVLFVASLLFFVVFV). Residues 123–154 (ASNDPNGSSSVIQGNSTAEPHTEMRQTSGWQG) lie on the Extracellular side of the membrane. The chain crosses the membrane as a helical span at residues 155–175 (LWGQFIISALLTPLVVHLLGL). The Cytoplasmic portion of the chain corresponds to 176–377 (RELSKVEESQ…LKDSELEIGG (202 aa)). Residues Tyr206, Arg272, 278–279 (RH), and Thr303 contribute to the 2',3'-cGAMP site. Residues Tyr206, Arg272, Arg278, and 300-303 (EYAT) each bind 3',3'-c-di-GMP.

The protein belongs to the TMEM173 family. As to quaternary structure, homodimer.

Its subcellular location is the endoplasmic reticulum membrane. Sensor of cytosolic DNA from bacteria and viruses that promotes autophagy. Acts by recognizing and binding cyclic GMP-AMP (cGAMP), a messenger produced by CGAS in response to DNA in the cytosol. Following cGAMP-binding, promotes the formation of autophagosomes, leading to target cytosolic DNA for degradation by the lysosome. Exhibits guanine base-specific ligand recognition. Binds 3'-3'linked cGAMP, 2'-3' linked cGAMP and 3'-3' linked c-di-GMP with much greater affinity as compared to 3'-3' linked c-di-AMP. Lacks the C-terminal tail (CTT) found in mammalian orthologs which is essential for interferon signaling. This is Stimulator of interferon genes protein from Nematostella vectensis (Starlet sea anemone).